Here is a 261-residue protein sequence, read N- to C-terminus: Indole-3-glycerol phosphate synthase (261 aa).

The protein belongs to the TrpC family.

It catalyses the reaction 1-(2-carboxyphenylamino)-1-deoxy-D-ribulose 5-phosphate + H(+) = (1S,2R)-1-C-(indol-3-yl)glycerol 3-phosphate + CO2 + H2O. It functions in the pathway amino-acid biosynthesis; L-tryptophan biosynthesis; L-tryptophan from chorismate: step 4/5. In Paraburkholderia xenovorans (strain LB400), this protein is Indole-3-glycerol phosphate synthase.